The chain runs to 218 residues: Adenylate kinase (218 aa).

An ATP-binding site is contributed by 10–15 (GAGKGT). Residues 30–59 (STGDMFRAAMADQTDLGVKAKAFIDKGELV) are NMP. AMP is bound by residues Thr31, Arg36, 57 to 59 (ELV), 85 to 88 (GFPR), and Gln92. The LID stretch occupies residues 126 to 164 (GRFICKTCGATYHKLYHPTQVEGTCDRCGGHVFFQREDD). Arg127 contacts ATP. Zn(2+) is bound by residues Cys130 and Cys133. Residue 136 to 137 (TY) coordinates ATP. 2 residues coordinate Zn(2+): Cys150 and Cys153. Arg161 and Arg172 together coordinate AMP. Position 200 (Gln200) interacts with ATP.

The protein belongs to the adenylate kinase family. As to quaternary structure, monomer.

It localises to the cytoplasm. It carries out the reaction AMP + ATP = 2 ADP. It participates in purine metabolism; AMP biosynthesis via salvage pathway; AMP from ADP: step 1/1. Its function is as follows. Catalyzes the reversible transfer of the terminal phosphate group between ATP and AMP. Plays an important role in cellular energy homeostasis and in adenine nucleotide metabolism. This is Adenylate kinase from Latilactobacillus sakei subsp. sakei (strain 23K) (Lactobacillus sakei subsp. sakei).